The following is a 908-amino-acid chain: AdoMet-dependent rRNA methyltransferase SPB1 (908 aa).

S-adenosyl-L-methionine contacts are provided by glycine 57, tryptophan 59, aspartate 77, aspartate 93, and aspartate 118. Lysine 158 serves as the catalytic Proton acceptor. A coiled-coil region spans residues 378-422 (MDEEEQITEELQKLQQAKLAKTKRERKRANEKKARELLKLQLNMT). 3 disordered regions span residues 440 to 513 (IFDL…YDSY), 535 to 715 (NFDA…DEVK), and 806 to 841 (AKGR…EKAR). Residues 464-493 (DDGEGMDLASESEEEEDEDEEDDEVLDSDE) show a composition bias toward acidic residues. Positions 535–545 (NFDAWHGIQEK) are enriched in basic and acidic residues. Composition is skewed to acidic residues over residues 546 to 564 (SDEE…EEGG) and 579 to 591 (DSSD…EPET). Residues 592 to 610 (EVPKKIKKVSFEKPARSEK) show a composition bias toward basic and acidic residues. 2 stretches are compositionally biased toward acidic residues: residues 650-678 (DGDD…EDAS) and 685-712 (EGDD…EDQD). The segment covering 816–827 (ARMEKAKKKADG) has biased composition (basic and acidic residues).

This sequence belongs to the class I-like SAM-binding methyltransferase superfamily. RNA methyltransferase RlmE family. SPB1 subfamily. As to quaternary structure, component of the nucleolar and nucleoplasmic pre-60S ribosomal particle.

The protein localises to the nucleus. Its subcellular location is the nucleolus. It catalyses the reaction a ribonucleotide in rRNA + S-adenosyl-L-methionine = a 2'-O-methylribonucleotide in rRNA + S-adenosyl-L-homocysteine + H(+). Functionally, required for proper assembly of pre-ribosomal particles during the biogenesis of the 60S ribosomal subunit. In Cryptococcus neoformans var. neoformans serotype D (strain B-3501A) (Filobasidiella neoformans), this protein is AdoMet-dependent rRNA methyltransferase SPB1.